We begin with the raw amino-acid sequence, 220 residues long: Octanoyltransferase (220 aa).

The BPL/LPL catalytic domain maps to 31-211 (GTAADHLLLL…HFARIFDFEM (181 aa)). Residues 76–83 (RGGDVTYH), 143–145 (AIG), and 156–158 (GFA) contribute to the substrate site. C174 functions as the Acyl-thioester intermediate in the catalytic mechanism.

This sequence belongs to the LipB family.

Its subcellular location is the cytoplasm. The enzyme catalyses octanoyl-[ACP] + L-lysyl-[protein] = N(6)-octanoyl-L-lysyl-[protein] + holo-[ACP] + H(+). Its pathway is protein modification; protein lipoylation via endogenous pathway; protein N(6)-(lipoyl)lysine from octanoyl-[acyl-carrier-protein]: step 1/2. Functionally, catalyzes the transfer of endogenously produced octanoic acid from octanoyl-acyl-carrier-protein onto the lipoyl domains of lipoate-dependent enzymes. Lipoyl-ACP can also act as a substrate although octanoyl-ACP is likely to be the physiological substrate. This Solibacter usitatus (strain Ellin6076) protein is Octanoyltransferase.